Consider the following 124-residue polypeptide: MESFVAMKVVCIILLFVIAAEAESINEKSDVEPSKGKNNSGLQFKFPPYVPNHKAFALRLLSLCEQGIYGTKINDLKVDFKNCTFLCIRKYENLTLPLPEDTPCGPNNQTCHKKDECVGYIPGC.

An N-terminal signal peptide occupies residues 1–22 (MESFVAMKVVCIILLFVIAAEA). N-linked (GlcNAc...) asparagine glycosylation is found at asparagine 82 and asparagine 93. The tract at residues 105–124 (GPNNQTCHKKDECVGYIPGC) is CD4-binding.

Belongs to the salp15 family. In terms of assembly, interacts with host CD4. Interacts with host DC-SIGN (CD209). Interacts with Borrelia outer surface protein C (OspC). As to expression, expressed in salivary glands. Detected in fed adult female.

Its subcellular location is the secreted. In terms of biological role, salivary tick protein that downregulates host immune system by binding to both dendritic cells, and CD4(+) T cells. Specifically binds to the CD4 coreceptor on T cells. This interaction prevents the activation of the Src kinase, Lck, and its downstream substrate Zap-70, and results in deficient activation of PLCgamma1, the repression of calcium fluxes triggered by T-cell antigen receptor (TCR) ligation, and a subsequent reduction in interleukin-2 production. This salivary protein also binds to DC-SIGN (CD209) on dendritic cells (DC) and activates the Raf-1 kinase/MEK signaling pathway that results in down-regulating expression of pro-inflammatory cytokines. Furthermore, it inhibits T cell proliferation induced by DCs. In addition, it inhibits in vitro keratinocyte inflammation induced by Borrelia burgdorferi or by the major outer surface protein (OspC) of Borrelia. In addition, it downregulates chemokines and monocyte chemoattractant protein 1, as well as several antimicrobial peptides such as defensins, cathelicidin, psoriasin, and RNase 7. Apart from its immunomodulatory activities, it is also associated with protection of Borrelia spirochetes from antibody-mediated killing through its binding to OspC. In vivo, tests on different immune disease animal models show promising therapeutic results, e.g., in inhibiting HIV infection, experimental autoimmune encephalomyelitis, transplantation rejection, and asthma. The sequence is that of Salivary protein 15 Iric-3 from Ixodes ricinus (Common tick).